Reading from the N-terminus, the 117-residue chain is Modulator protein MzrA (117 aa).

Topologically, residues Met-1 to Ser-11 are cytoplasmic. The helical transmembrane segment at Ala-12–Ser-29 threads the bilayer. Residues Ser-30 to Ser-117 lie on the Periplasmic side of the membrane.

It belongs to the MzrA family. Interacts with EnvZ.

It localises to the cell inner membrane. Modulates the activity of the EnvZ/OmpR two-component regulatory system, probably by directly modulating EnvZ enzymatic activity and increasing stability of phosphorylated OmpR. The polypeptide is Modulator protein MzrA (Dickeya dadantii (strain 3937) (Erwinia chrysanthemi (strain 3937))).